Consider the following 112-residue polypeptide: ATP synthase epsilon chain (112 aa).

This sequence belongs to the ATPase epsilon chain family. In terms of assembly, F-type ATPases have 2 components, CF(1) - the catalytic core - and CF(0) - the membrane proton channel. CF(1) has five subunits: alpha(3), beta(3), gamma(1), delta(1), epsilon(1). CF(0) has three main subunits: a, b and c.

Its subcellular location is the cell inner membrane. Produces ATP from ADP in the presence of a proton gradient across the membrane. The sequence is that of ATP synthase epsilon chain from Rickettsia felis (strain ATCC VR-1525 / URRWXCal2) (Rickettsia azadi).